A 345-amino-acid chain; its full sequence is Annexin A9 (345 aa).

Annexin repeat units follow at residues 41-112 (FSVD…ALLQ), 113-184 (PTAQ…ALAK), 197-266 (NLAE…GLAS), and 270-341 (NTPL…ALCR).

Belongs to the annexin family. In terms of assembly, homodimer. In terms of tissue distribution, expressed in the stratified squamous skin epithelium, but not in epithelia of other types (at protein level).

Low affinity receptor for acetylcholine known to be targeted by disease-causing pemphigus vulgaris antibodies in keratinocytes. The sequence is that of Annexin A9 (ANXA9) from Homo sapiens (Human).